Consider the following 309-residue polypeptide: Ribonuclease Z (309 aa).

7 residues coordinate Zn(2+): His-63, His-65, Asp-67, His-68, His-141, Asp-212, and His-270. Asp-67 serves as the catalytic Proton acceptor.

Belongs to the RNase Z family. As to quaternary structure, homodimer. Zn(2+) serves as cofactor.

The catalysed reaction is Endonucleolytic cleavage of RNA, removing extra 3' nucleotides from tRNA precursor, generating 3' termini of tRNAs. A 3'-hydroxy group is left at the tRNA terminus and a 5'-phosphoryl group is left at the trailer molecule.. Functionally, zinc phosphodiesterase, which displays some tRNA 3'-processing endonuclease activity. Probably involved in tRNA maturation, by removing a 3'-trailer from precursor tRNA. The polypeptide is Ribonuclease Z (Lactobacillus johnsonii (strain CNCM I-12250 / La1 / NCC 533)).